We begin with the raw amino-acid sequence, 238 residues long: Enoyl-CoA delta isomerase 3 (238 aa).

The protein belongs to the enoyl-CoA hydratase/isomerase family.

It is found in the cytoplasm. The protein localises to the nucleus. It catalyses the reaction a (3Z)-enoyl-CoA = a 4-saturated (2E)-enoyl-CoA. The catalysed reaction is a (3E)-enoyl-CoA = a 4-saturated (2E)-enoyl-CoA. Its pathway is lipid metabolism; fatty acid beta-oxidation. Its function is as follows. Able to isomerize both 3-cis and 3-trans double bonds into the 2-trans form in a range of enoyl-CoA species. Essential for the beta oxidation of unsaturated fatty acids. This is Enoyl-CoA delta isomerase 3 from Arabidopsis thaliana (Mouse-ear cress).